The primary structure comprises 407 residues: MTYETLLERFLNYVKINTRSNPASTTTPSTKSQADFALTVLKPEMEAIGLQDIHYNPANGYLIGSLPANSSKLTRKIGFIAHMDTADFNAEGVAPQIIESYQGGEIKLGQSGYSLCPEDFPNLNQYLGQTLITTDGTTLLGADDKSGIAEIMTAIEFLVANPQIEHCDIKVAFGPDEEIGVGADKFDVNAFDVDFAYTIDGGPLGELQYETFSAAALELKVLGRNVHPGTAKNQMINALQLAMDFHSQLPVDDRPEKTDGYQGFYHLHSMSGTVEEAQASYIIRDFEDSSFEARKAFVTQLAEEMNSQLGAERVFVTVTDQYYNMKKVIEKDMTPVNLAKAVMEDLAIKPVIEPIRGGTDGSKISFMGIPTPNIFAGGENMHGRFEFVSLQTMEKAVDVILGIVQKA.

Residue His82 participates in Zn(2+) binding. Asp84 is a catalytic residue. Residue Asp143 coordinates Zn(2+). Glu177 serves as the catalytic Proton acceptor. Zn(2+) is bound by residues Glu178, Asp200, and His382.

The protein belongs to the peptidase M20B family. Requires Zn(2+) as cofactor.

The protein resides in the cytoplasm. The enzyme catalyses Release of the N-terminal residue from a tripeptide.. Functionally, cleaves the N-terminal amino acid of tripeptides. This Streptococcus equi subsp. equi (strain 4047) protein is Peptidase T.